Reading from the N-terminus, the 179-residue chain is Large ribosomal subunit protein uL6 (179 aa).

It belongs to the universal ribosomal protein uL6 family. Part of the 50S ribosomal subunit.

In terms of biological role, this protein binds to the 23S rRNA, and is important in its secondary structure. It is located near the subunit interface in the base of the L7/L12 stalk, and near the tRNA binding site of the peptidyltransferase center. The chain is Large ribosomal subunit protein uL6 from Treponema pallidum (strain Nichols).